The sequence spans 364 residues: Carbamoyl phosphate synthase pyrimidine-specific small chain (364 aa).

Residues 1-171 are CPSase; that stretch reads MKRRLVLENG…AYPSPGRGKR (171 aa). Residues S45, G219, and G221 each coordinate L-glutamine. A Glutamine amidotransferase type-1 domain is found at 171 to 356; it reads RIVLVDFGMK…IEMIETTEKE (186 aa). C246 acts as the Nucleophile in catalysis. Residues L247, Q250, N288, G290, and Y291 each coordinate L-glutamine. Catalysis depends on residues H329 and E331.

This sequence belongs to the CarA family. In terms of assembly, composed of two chains; the small (or glutamine) chain promotes the hydrolysis of glutamine to ammonia, which is used by the large (or ammonia) chain to synthesize carbamoyl phosphate. Tetramer of heterodimers (alpha,beta)4. Interacts with BrxC.

The enzyme catalyses hydrogencarbonate + L-glutamine + 2 ATP + H2O = carbamoyl phosphate + L-glutamate + 2 ADP + phosphate + 2 H(+). The catalysed reaction is L-glutamine + H2O = L-glutamate + NH4(+). It functions in the pathway pyrimidine metabolism; UMP biosynthesis via de novo pathway; (S)-dihydroorotate from bicarbonate: step 1/3. Functionally, small subunit of the glutamine-dependent carbamoyl phosphate synthetase (CPSase). CPSase catalyzes the formation of carbamoyl phosphate from the ammonia moiety of glutamine, carbonate, and phosphate donated by ATP, constituting the first step of the biosynthetic pathway leading to arginine and/or urea. The small subunit (glutamine amidotransferase) binds and cleaves glutamine to supply the large subunit with the substrate ammonia. The chain is Carbamoyl phosphate synthase pyrimidine-specific small chain from Bacillus subtilis (strain 168).